The following is a 274-amino-acid chain: Large ribosomal subunit protein uL2 (274 aa).

The tract at residues 223-274 (VAMNPVDHPHGGGEGRTSGGRHPVTPWGVPTKGYKTRSNKRTDKYIVRRRNK) is disordered.

This sequence belongs to the universal ribosomal protein uL2 family. Part of the 50S ribosomal subunit. Forms a bridge to the 30S subunit in the 70S ribosome.

Its function is as follows. One of the primary rRNA binding proteins. Required for association of the 30S and 50S subunits to form the 70S ribosome, for tRNA binding and peptide bond formation. It has been suggested to have peptidyltransferase activity; this is somewhat controversial. Makes several contacts with the 16S rRNA in the 70S ribosome. This chain is Large ribosomal subunit protein uL2, found in Shewanella oneidensis (strain ATCC 700550 / JCM 31522 / CIP 106686 / LMG 19005 / NCIMB 14063 / MR-1).